Consider the following 680-residue polypeptide: Probable oxidoreductase YoaE (680 aa).

One can recognise a 4Fe-4S Mo/W bis-MGD-type domain in the interval 9-66 (NGIFKSVCSLDCPDQCGLLIHKKDGKIVKVQGDPDHPVTAGNICNKVRNMTERIYDEK). The [4Fe-4S] cluster site is built by Cys16, Cys20, Cys24, and Cys52.

This sequence belongs to the prokaryotic molybdopterin-containing oxidoreductase family. Requires Mo-bis(molybdopterin guanine dinucleotide) as cofactor.

This chain is Probable oxidoreductase YoaE (yoaE), found in Bacillus subtilis (strain 168).